Here is a 151-residue protein sequence, read N- to C-terminus: Putative pre-16S rRNA nuclease (151 aa).

It belongs to the YqgF nuclease family.

The protein resides in the cytoplasm. Its function is as follows. Could be a nuclease involved in processing of the 5'-end of pre-16S rRNA. The chain is Putative pre-16S rRNA nuclease from Thermosynechococcus vestitus (strain NIES-2133 / IAM M-273 / BP-1).